A 349-amino-acid chain; its full sequence is Probable ethanolamine kinase A (349 aa).

Belongs to the choline/ethanolamine kinase family.

Its subcellular location is the cytoplasm. The catalysed reaction is ethanolamine + ATP = phosphoethanolamine + ADP + H(+). It participates in phospholipid metabolism; phosphatidylethanolamine biosynthesis; phosphatidylethanolamine from ethanolamine: step 1/3. In terms of biological role, highly specific for ethanolamine phosphorylation. May be a rate-controlling step in phosphatidylethanolamine biosynthesis. This chain is Probable ethanolamine kinase A (etnkA), found in Dictyostelium discoideum (Social amoeba).